We begin with the raw amino-acid sequence, 348 residues long: Lysophosphatidic acid receptor 2 (348 aa).

Topologically, residues 1–30 are extracellular; it reads MGQCYYNETIGFFYNNSGKELSLHWRPKDV. Asn7 and Asn15 each carry an N-linked (GlcNAc...) asparagine glycan. The helical transmembrane segment at 31-51 threads the bilayer; the sequence is VVVALGLTVSVLVLLTNLLVI. Residues 52–66 lie on the Cytoplasmic side of the membrane; the sequence is AAIASNRRFHQPIYY. Residues 67 to 87 form a helical membrane-spanning segment; sequence LLGNLAAADLFAGMAYLFLMF. Topologically, residues 88–104 are extracellular; that stretch reads HTGPRTARLSIKGWFLR. A helical transmembrane segment spans residues 105–124; the sequence is QGLLDTSLTASVATLLAIAV. The Cytoplasmic segment spans residues 125-144; the sequence is ERHRSVMAVQLHSRLPRGRV. The chain crosses the membrane as a helical span at residues 145 to 165; it reads VTLIVGVWAAALGLGLLPAHF. The Extracellular segment spans residues 166–185; it reads WHCLCDLDSCSRMVPLFSRS. A helical membrane pass occupies residues 186–206; it reads YLAAWALSSLLVFLLMVAVYT. The Cytoplasmic segment spans residues 207-239; sequence RIFFYVRRRVERMAEHVSCHPRYRETTLSLVKT. Residues 240–260 form a helical membrane-spanning segment; sequence VVIILGAFVVCWTPGQVVLLL. At 261–270 the chain is on the extracellular side; sequence DGLDCKSCNV. Residues 271–291 form a helical membrane-spanning segment; sequence LAVEKYFLLLAEANSLVNAVV. Residues 292-348 lie on the Cytoplasmic side of the membrane; it reads YSCRDAEMRRTFRRLLCCMCLRWSSHKSARYSASAQTGASTRIMLPENGRPLMDSTL. A lipid anchor (S-palmitoyl cysteine) is attached at Cys308. A PDZ-binding motif is present at residues 345 to 348; it reads DSTL.

Belongs to the G-protein coupled receptor 1 family. Interacts with SLC9A3R2/NHERF2, MAGI3 and PLCB3. Interacts with RALA and GRK2. As to expression, most abundantly expressed in testes, kidney, and embryonic brain. Other organs also express the transcript, including heart, lung, spleen, thymus, stomach, and adult brain. Several have little or no expression, including liver, small intestine, and skeletal muscle.

It is found in the cell surface. The protein localises to the cell membrane. Its function is as follows. Receptor for lysophosphatidic acid (LPA), a mediator of diverse cellular activities. Seems to be coupled to the G(i)/G(o), G(12)/G(13), and G(q) families of heteromeric G proteins. Plays a key role in phospholipase C-beta (PLC-beta) signaling pathway Stimulates phospholipase C (PLC) activity in a manner that is independent of RALA activation. This Mus musculus (Mouse) protein is Lysophosphatidic acid receptor 2.